The chain runs to 406 residues: Isocitrate dehydrogenase [NADP] (406 aa).

Positions 72, 75, 77, and 82 each coordinate NADP(+). Residues S94, N96, R100, E110, and R132 each contribute to the D-threo-isocitrate site. 3 residues coordinate Mn(2+): D250, D273, and D277. Residues G308, T309, V310, H313, and N326 each contribute to the NADP(+) site.

Belongs to the isocitrate and isopropylmalate dehydrogenases family. As to quaternary structure, homodimer. Requires Mg(2+) as cofactor. Mn(2+) is required as a cofactor.

It catalyses the reaction D-threo-isocitrate + NADP(+) = 2-oxoglutarate + CO2 + NADPH. Its function is as follows. Catalyzes the oxidative decarboxylation of isocitrate to 2-oxoglutarate and carbon dioxide with the concomitant reduction of NADP(+). This Sphingobium yanoikuyae (Sphingomonas yanoikuyae) protein is Isocitrate dehydrogenase [NADP] (icd).